The following is a 252-amino-acid chain: TVP38/TMEM64 family membrane protein Mb1528c (252 aa).

Transmembrane regions (helical) follow at residues 32–52, 64–84, 88–108, 149–169, 177–197, and 209–229; these read IVGT…VPVP, LGAW…VPPF, AFTL…IAVV, WLAI…INYA, ILSF…AVVI, and LLIL…VYEI.

The protein belongs to the TVP38/TMEM64 family.

The protein localises to the cell membrane. The protein is TVP38/TMEM64 family membrane protein Mb1528c of Mycobacterium bovis (strain ATCC BAA-935 / AF2122/97).